The following is a 292-amino-acid chain: Coatomer subunit epsilon-1 (292 aa).

This sequence belongs to the COPE family. Oligomeric complex that consists of at least the alpha, beta, beta', gamma, delta, epsilon and zeta subunits.

It is found in the cytoplasm. The protein resides in the golgi apparatus membrane. It localises to the cytoplasmic vesicle. Its subcellular location is the COPI-coated vesicle membrane. Functionally, the coatomer is a cytosolic protein complex that binds to dilysine motifs and reversibly associates with Golgi non-clathrin-coated vesicles, which further mediate biosynthetic protein transport from the ER, via the Golgi up to the trans Golgi network. The coatomer complex is required for budding from Golgi membranes, and is essential for the retrograde Golgi-to-ER transport of dilysine-tagged proteins. This is Coatomer subunit epsilon-1 from Arabidopsis thaliana (Mouse-ear cress).